We begin with the raw amino-acid sequence, 234 residues long: tRNA (guanine-N(1)-)-methyltransferase (234 aa).

S-adenosyl-L-methionine is bound by residues G115 and 135 to 140; that span reads VGDYIL.

It belongs to the RNA methyltransferase TrmD family. In terms of assembly, homodimer.

The protein localises to the cytoplasm. It carries out the reaction guanosine(37) in tRNA + S-adenosyl-L-methionine = N(1)-methylguanosine(37) in tRNA + S-adenosyl-L-homocysteine + H(+). Specifically methylates guanosine-37 in various tRNAs. In Rickettsia akari (strain Hartford), this protein is tRNA (guanine-N(1)-)-methyltransferase.